A 195-amino-acid polypeptide reads, in one-letter code: Putative NADH dehydrogenase/NAD(P)H nitroreductase Bcep18194_B1060 (195 aa).

The protein belongs to the nitroreductase family. HadB/RutE subfamily. The cofactor is FMN.

The polypeptide is Putative NADH dehydrogenase/NAD(P)H nitroreductase Bcep18194_B1060 (Burkholderia lata (strain ATCC 17760 / DSM 23089 / LMG 22485 / NCIMB 9086 / R18194 / 383)).